The sequence spans 262 residues: Calbindin (262 aa).

T2 bears the N-acetylthreonine mark. 5 EF-hand domains span residues 12 to 47 (ISAAQFFEIWHHYDSDGNGYMDGKELQNFIQELQQA), 54 to 89 (DLTPEMKAFVDQYGKATDGKIGIVELAQVLPTEENF), 99 to 134 (KSSEDFMQTWRKYDSDHSGFIDSEELKSFLKDLLQK), 143 to 178 (KLTEYTEIMLRMFDANNDGKLELTELARLLPVQENF), and 187 to 222 (MCAKEFNKAFEMYDQDGNGYIDENELDALLKDLCEK). 5 residues coordinate Ca(2+): D25, D27, N29, Y31, and E36. Ca(2+) contacts are provided by D112, D114, S116, E123, D156, N158, D160, K162, E167, D200, D202, N204, Y206, and E211.

Belongs to the calbindin family. Highly abundant in supporting cells. Also present in hair cells.

Functionally, buffers cytosolic calcium. May stimulate a membrane Ca(2+)-ATPase and a 3',5'-cyclic nucleotide phosphodiesterase. The chain is Calbindin (CALB1) from Gallus gallus (Chicken).